The sequence spans 445 residues: ATP-dependent protease ATPase subunit HslU (445 aa).

ATP-binding positions include Ile-17, 59–64, Asp-254, Glu-319, and Arg-391; that span reads GVGKTE.

It belongs to the ClpX chaperone family. HslU subfamily. As to quaternary structure, a double ring-shaped homohexamer of HslV is capped on each side by a ring-shaped HslU homohexamer. The assembly of the HslU/HslV complex is dependent on binding of ATP.

It localises to the cytoplasm. Functionally, ATPase subunit of a proteasome-like degradation complex; this subunit has chaperone activity. The binding of ATP and its subsequent hydrolysis by HslU are essential for unfolding of protein substrates subsequently hydrolyzed by HslV. HslU recognizes the N-terminal part of its protein substrates and unfolds these before they are guided to HslV for hydrolysis. The protein is ATP-dependent protease ATPase subunit HslU of Pseudomonas syringae pv. tomato (strain ATCC BAA-871 / DC3000).